A 245-amino-acid polypeptide reads, in one-letter code: 1-(5-phosphoribosyl)-5-[(5-phosphoribosylamino)methylideneamino] imidazole-4-carboxamide isomerase (245 aa).

Catalysis depends on D7, which acts as the Proton acceptor. D129 (proton donor) is an active-site residue.

This sequence belongs to the HisA/HisF family.

Its subcellular location is the cytoplasm. It catalyses the reaction 1-(5-phospho-beta-D-ribosyl)-5-[(5-phospho-beta-D-ribosylamino)methylideneamino]imidazole-4-carboxamide = 5-[(5-phospho-1-deoxy-D-ribulos-1-ylimino)methylamino]-1-(5-phospho-beta-D-ribosyl)imidazole-4-carboxamide. The protein operates within amino-acid biosynthesis; L-histidine biosynthesis; L-histidine from 5-phospho-alpha-D-ribose 1-diphosphate: step 4/9. This chain is 1-(5-phosphoribosyl)-5-[(5-phosphoribosylamino)methylideneamino] imidazole-4-carboxamide isomerase, found in Cronobacter sakazakii (strain ATCC BAA-894) (Enterobacter sakazakii).